A 376-amino-acid polypeptide reads, in one-letter code: N-acetyldiaminopimelate deacetylase (376 aa).

The active site involves aspartate 69. Glutamate 128 serves as the catalytic Proton acceptor.

The protein belongs to the peptidase M20A family. N-acetyldiaminopimelate deacetylase subfamily.

The catalysed reaction is N-acetyl-(2S,6S)-2,6-diaminopimelate + H2O = (2S,6S)-2,6-diaminopimelate + acetate. Its pathway is amino-acid biosynthesis; L-lysine biosynthesis via DAP pathway; LL-2,6-diaminopimelate from (S)-tetrahydrodipicolinate (acetylase route): step 3/3. In terms of biological role, catalyzes the conversion of N-acetyl-diaminopimelate to diaminopimelate and acetate. The protein is N-acetyldiaminopimelate deacetylase of Bacillus cereus (strain G9842).